Here is a 269-residue protein sequence, read N- to C-terminus: Tryptophan synthase alpha chain (269 aa).

Catalysis depends on proton acceptor residues E41 and D52.

Belongs to the TrpA family. In terms of assembly, tetramer of two alpha and two beta chains.

The enzyme catalyses (1S,2R)-1-C-(indol-3-yl)glycerol 3-phosphate + L-serine = D-glyceraldehyde 3-phosphate + L-tryptophan + H2O. It participates in amino-acid biosynthesis; L-tryptophan biosynthesis; L-tryptophan from chorismate: step 5/5. The alpha subunit is responsible for the aldol cleavage of indoleglycerol phosphate to indole and glyceraldehyde 3-phosphate. This Geobacillus stearothermophilus (Bacillus stearothermophilus) protein is Tryptophan synthase alpha chain.